The following is a 1741-amino-acid chain: MEPNRRLRYFRSEIPQPVTEHRFPKRVEKLVFSVLSSNALMKLSEVQITTPILYEHYPSPATNGVLDKRLGLSDKVGKCATCGKDTKMCIGHFGTISLALPVFHPGLINDARTMLSIVCPFCSRVKISEADRLKYKVLNHKFSLAIVKEAQEQAKKQVNCPFCHAPSTICKKSQGFRVLREMHYEERATKILADVIKHQKDIEKIQELDQRLRNHVVDPIQALHILQKVPECDYPYLGIPWQSRNVYASQQTPDSIASNDASQLFSRGSSKLLARTASRFIAQHQGISDRATRLTSHAFLTRPQDVILTHIPVPPSCLRPSVQSGSGAGTTEDNLTSHLVRILTINDKLKEAMVSGAVATSKVYAKWDQLNMDVSLLYIGKIPGGVQPVKNKTDSGTKEGTGIIDRLKGKAGRFRSNLSGKRVNFSGRTVISPNPYLSMQQVAIPRLIAQNLTFPEIVTSRNIRFLRELILNGKTYPGANEVLLLNDTIRYNPALKRLGIDVKQSRDMEAKAMELVSRCVDTFNLNSLCADLPELQAAIQHLVSESSNAINSELKAEDLPQNQPLFAKEVYDPAQKGESNNIDNNVCEIDELKLEDTADYQVGESAGQASTVAVEQPPESRTVLKLNSIASLQLTNASSQHLSTFKLNTVSLLQKDRRGRQAIANSLRPNDIVYRHLLPNDTLLFNRQPSLHRMSIMQFNAVIHENRTFSFNPVVCSPFNADFDGDEMNIFYMQGQEARAEAGILMGSHENIISPRHGECMIGLTQDFLTGIYLLSGKGIFMTRQEYCQHVSYGCDGFGDATYGVSLYNYGREFIKSIHDRRGTEEDTVGFVKVPCLSQPCIVYPRQLYSGKQVLSVLMKGNDFDSVNINLEHGDKTYKKDSDRRALSVNDDYIIIQNSEHLVGRLTKTFLASSKNCIFYFLVQNYGPVSAARIMLRFAKVAARFLMNYGFTIGIDDVMPSQRVLGKKEVIVQEGYEKAQEKIRDYESGKLEAIPGSTVQETLEATLNQILSNVRESCAQIALKELHFTNKPLIMSLCGSKGSPINIAQMIIILGQQSFGGSRAPDDFYTRSTPYFYHYSKEPNAKGFILNSFYTGLLPFEFLAHARAGRDGVIDSACKTADTGYLQRRLVKCLEDLSVSYDFTVRNSKKSVVQFRFGHDGFDPIKLEVGTGQCFDLDTLLRHIILLNRSQDLAEGAFPVLLDRYKAEAELDVLLNKDFYGQEACLIERSNVTSYFQQSILPKLTTNTHIATTVAPALAASFLQTTLTKKDIDDFLRQVRRKYIRLNLEPGSPCGAVAAQSVGEPSTQMTLKSFHHAGLASMNITQGVPRLKEIVDGVVKISTPITTVELHVDVDKEELAATVTEKYLEKARMMKNIIECTYLGQISASIIECYSQSVCHIEVNLDMKIIADMGLAGIITVETVVASILHNDKAKKLVGQDQSSGSVSIHSATRFSVRPLTQSRDDLLFDIQSLKLLLPMIPVSGISTCSRAVINEYKEFCQGATSSAPLTKYNLLVEGIGLQNILNVSGIDFTRTLSNNIVEVANTLGIEAAVATISNEIKACMDSHGMAVDMRHIRLLADIMCFRGRVLGFTRFGLTKMKADSVIMLASFEKTGEHLFNAALGNKVDEANGVTESIILGKPMSMGTGSFSLLQAPYFDEKTGKTIEYQPKQTTRFLGEVLNKQYDEEVDAIVNAFWYDEKLYLTGAEAKAKLLRGRRHANKRSWSRGKERHASLKPKNR.

Zn(2+) contacts are provided by Cys-79, Cys-82, Cys-89, His-92, Cys-119, Cys-122, and Cys-160. Positions 722, 724, and 726 each coordinate Mg(2+). Residues 1099 to 1111 (PFEFLAHARAGRD) form a bridging helix region. The segment at 1719 to 1741 (RHANKRSWSRGKERHASLKPKNR) is disordered.

This sequence belongs to the RNA polymerase beta' chain family. As to quaternary structure, component of the RNA polymerase III (Pol III) complex consisting of 17 subunits.

The protein localises to the nucleus. It catalyses the reaction RNA(n) + a ribonucleoside 5'-triphosphate = RNA(n+1) + diphosphate. In terms of biological role, DNA-dependent RNA polymerase catalyzes the transcription of DNA into RNA using the four ribonucleoside triphosphates as substrates. Largest and catalytic core component of RNA polymerase III which synthesizes small RNAs, such as 5S rRNA and tRNAs. Forms the polymerase active center together with the second largest subunit. A single-stranded DNA template strand of the promoter is positioned within the central active site cleft of Pol III. A bridging helix emanates from RPC1 and crosses the cleft near the catalytic site and is thought to promote translocation of Pol III by acting as a ratchet that moves the RNA-DNA hybrid through the active site by switching from straight to bent conformations at each step of nucleotide addition. The chain is DNA-directed RNA polymerase III subunit RPC1 (RPOA3) from Giardia intestinalis (Giardia lamblia).